The sequence spans 406 residues: Succinylornithine transaminase (406 aa).

Lys-252 is subject to N6-(pyridoxal phosphate)lysine.

It belongs to the class-III pyridoxal-phosphate-dependent aminotransferase family. AstC subfamily. Pyridoxal 5'-phosphate is required as a cofactor.

The enzyme catalyses N(2)-succinyl-L-ornithine + 2-oxoglutarate = N-succinyl-L-glutamate 5-semialdehyde + L-glutamate. Its pathway is amino-acid degradation; L-arginine degradation via AST pathway; L-glutamate and succinate from L-arginine: step 3/5. Catalyzes the transamination of N(2)-succinylornithine and alpha-ketoglutarate into N(2)-succinylglutamate semialdehyde and glutamate. Can also act as an acetylornithine aminotransferase. This chain is Succinylornithine transaminase, found in Shigella boydii serotype 18 (strain CDC 3083-94 / BS512).